We begin with the raw amino-acid sequence, 694 residues long: NADPH--cytochrome P450 reductase (694 aa).

Topologically, residues 1-8 (MAQLDTLD) are lumenal. A helical membrane pass occupies residues 9–31 (LVVLAVLLVGSVAYFTKGTYWAV). Residues 32-694 (AKDPYASTGP…RGRYQEDVWS (663 aa)) lie on the Cytoplasmic side of the membrane. The Flavodoxin-like domain maps to 66–220 (CVIFYGSQTG…DFLAWKEPMW (155 aa)). FMN is bound by residues 72–77 (SQTGTA), 123–126 (ATYG), 168–177 (LGNNTYEHYN), and D203. Residues 276–537 (HNPFIAPIAE…HVRHSNFKLP (262 aa)) form the FAD-binding FR-type domain. An NADP(+)-binding site is contributed by R295. FAD-binding positions include 450–453 (RYYS), 468–470 (TAV), and 485–488 (GVTT). Residues T551, 613–614 (SR), 619–623 (KVYVQ), and E655 contribute to the NADP(+) site. W693 is an FAD binding site.

This sequence belongs to the NADPH--cytochrome P450 reductase family. In the N-terminal section; belongs to the flavodoxin family. The protein in the C-terminal section; belongs to the flavoprotein pyridine nucleotide cytochrome reductase family. Requires FAD as cofactor. FMN is required as a cofactor.

Its subcellular location is the endoplasmic reticulum membrane. It is found in the mitochondrion outer membrane. It localises to the cell membrane. The enzyme catalyses 2 oxidized [cytochrome P450] + NADPH = 2 reduced [cytochrome P450] + NADP(+) + H(+). This enzyme is required for electron transfer from NADP to cytochrome P450 in microsomes. It can also provide electron transfer to heme oxygenase and cytochrome B5. Involved in ergosterol biosynthesis. In Aspergillus niger, this protein is NADPH--cytochrome P450 reductase.